A 171-amino-acid chain; its full sequence is Co-chaperone protein HscB (171 aa).

The J domain maps to 2 to 74 (DYFTLFGLPA…LTRAEYLLSL (73 aa)).

The protein belongs to the HscB family. Interacts with HscA and stimulates its ATPase activity. Interacts with IscU.

Functionally, co-chaperone involved in the maturation of iron-sulfur cluster-containing proteins. Seems to help targeting proteins to be folded toward HscA. The chain is Co-chaperone protein HscB from Salmonella schwarzengrund (strain CVM19633).